The sequence spans 247 residues: ATP synthase subunit a, chloroplastic (247 aa).

5 helical membrane-spanning segments follow: residues 38–58 (QVLITSWVVIAILLGSAAIAV), 95–115 (VPFIGTMFLFIFVSNWSGALL), 134–154 (INTTVALALPTSVAYFYAGLT), 199–219 (LVVVVLVSLVPSVVPIPVMFL), and 220–240 (GLFTSSIQALIFATLAAAYIG).

This sequence belongs to the ATPase A chain family. In terms of assembly, F-type ATPases have 2 components, CF(1) - the catalytic core - and CF(0) - the membrane proton channel. CF(1) has five subunits: alpha(3), beta(3), gamma(1), delta(1), epsilon(1). CF(0) has four main subunits: a, b, b' and c.

The protein localises to the plastid. It localises to the chloroplast thylakoid membrane. Key component of the proton channel; it plays a direct role in the translocation of protons across the membrane. In Illicium oligandrum (Star anise), this protein is ATP synthase subunit a, chloroplastic.